The sequence spans 124 residues: Vitelline membrane protein Vm32E (124 aa).

An N-terminal signal peptide occupies residues M1–A19. The region spanning S42–T81 is the VM domain.

The protein belongs to the vitelline membrane family.

The protein localises to the secreted. Its function is as follows. Major early eggshell protein. The sequence is that of Vitelline membrane protein Vm32E from Drosophila pseudoobscura pseudoobscura (Fruit fly).